A 159-amino-acid chain; its full sequence is Ribosomal RNA large subunit methyltransferase H (159 aa).

S-adenosyl-L-methionine-binding positions include Leu-76, Gly-107, and 126 to 131 (LSKLTM).

It belongs to the RNA methyltransferase RlmH family. As to quaternary structure, homodimer.

It localises to the cytoplasm. It catalyses the reaction pseudouridine(1915) in 23S rRNA + S-adenosyl-L-methionine = N(3)-methylpseudouridine(1915) in 23S rRNA + S-adenosyl-L-homocysteine + H(+). Specifically methylates the pseudouridine at position 1915 (m3Psi1915) in 23S rRNA. This is Ribosomal RNA large subunit methyltransferase H from Acinetobacter baylyi (strain ATCC 33305 / BD413 / ADP1).